The chain runs to 255 residues: Hydroxyacylglutathione hydrolase (255 aa).

Histidine 56, histidine 58, aspartate 60, histidine 61, histidine 114, aspartate 133, and histidine 171 together coordinate Zn(2+).

The protein belongs to the metallo-beta-lactamase superfamily. Glyoxalase II family. As to quaternary structure, monomer. It depends on Zn(2+) as a cofactor.

The enzyme catalyses an S-(2-hydroxyacyl)glutathione + H2O = a 2-hydroxy carboxylate + glutathione + H(+). The protein operates within secondary metabolite metabolism; methylglyoxal degradation; (R)-lactate from methylglyoxal: step 2/2. Its function is as follows. Thiolesterase that catalyzes the hydrolysis of S-D-lactoyl-glutathione to form glutathione and D-lactic acid. The protein is Hydroxyacylglutathione hydrolase of Chelativorans sp. (strain BNC1).